The chain runs to 177 residues: Bifunctional protein PyrR (177 aa).

The PRPP-binding motif lies at 97–109 (IILVDDVLYTGRT).

Belongs to the purine/pyrimidine phosphoribosyltransferase family. PyrR subfamily.

The catalysed reaction is UMP + diphosphate = 5-phospho-alpha-D-ribose 1-diphosphate + uracil. Functionally, regulates the transcription of the pyrimidine nucleotide (pyr) operon in response to exogenous pyrimidines. Also displays a weak uracil phosphoribosyltransferase activity which is not physiologically significant. This chain is Bifunctional protein PyrR, found in Nitrosococcus oceani (strain ATCC 19707 / BCRC 17464 / JCM 30415 / NCIMB 11848 / C-107).